The sequence spans 351 residues: Histidine protein kinase SaeS (351 aa).

Transmembrane regions (helical) follow at residues 9-29 and 40-60; these read IIIG…IAYI and TLTL…SIFI. Residues 61-114 form the HAMP domain; that stretch reads NPLIQKIKQFNIKTKQFANGNYASNDKTFNSPKEIYELNQSFNKMASEITQQMN. The Histidine kinase domain maps to 129 to 348; the sequence is NLAHDLKTPL…TMTVTLHKLD (220 aa). The residue at position 132 (H132) is a Phosphohistidine; by autocatalysis.

In terms of processing, autophosphorylated.

The protein localises to the cell membrane. It carries out the reaction ATP + protein L-histidine = ADP + protein N-phospho-L-histidine.. Its function is as follows. Member of the two-component regulatory system SaeR/SaeS involved in the regulation of staphylococcal virulence factors in a strain-dependent fashion. Probably functions as a membrane-associated protein kinase that upon sensing the appropriate signal, autophosphorylates and in turn activates the cytosolic response regulator SaeR. The chain is Histidine protein kinase SaeS (saeS) from Staphylococcus aureus (strain MRSA252).